A 421-amino-acid polypeptide reads, in one-letter code: MNIINLINKKQRGKALNLAEINWFVNAVLNKTIADYQITAFLMAIWFKGMNPNELFLLTKAMVDTGEIIKFNHHGKISVDKHSTGGIGDKVSLALVPILTSLGFSVAKLSGRGLGYTGGTIDKLEAVGVKTELTDQQAQACLDKNDCFIIGQSKDIAPVDKVLYGLRDITGTVDSLPLIASSIMSKKLAVMNEYIFIDLKYGKGAFCKTKKIANELAKLMQSIAKSFKRKLSVKLSDMNQVLGKAVGNVIEVNEAVNFLKQDLDQVGQDFIDLMQTIVINILLETKQAKTKQKAIELYQDVLTSKKAWNRFLSFIESQGGNVELFTQKEGFFKPKYKASIKAEKSGILHFTDPIDLAKIGINLGAGRMKKTDQIDPMAGLFLMKKDNESVAVGDTVLNLYSSSPISNEYISAAQKTIIINK.

This sequence belongs to the thymidine/pyrimidine-nucleoside phosphorylase family. In terms of assembly, homodimer.

It catalyses the reaction thymidine + phosphate = 2-deoxy-alpha-D-ribose 1-phosphate + thymine. Its function is as follows. The enzymes which catalyze the reversible phosphorolysis of pyrimidine nucleosides are involved in the degradation of these compounds and in their utilization as carbon and energy sources, or in the rescue of pyrimidine bases for nucleotide synthesis. The polypeptide is Thymidine phosphorylase (deoA) (Mycoplasma genitalium (strain ATCC 33530 / DSM 19775 / NCTC 10195 / G37) (Mycoplasmoides genitalium)).